A 578-amino-acid polypeptide reads, in one-letter code: Palmitoyltransferase ZDHHC1 (578 aa).

The Cytoplasmic segment spans residues 1–41 (MDVCSKNSNRTAPVSEGGIRRADVPLCSRTNGWSWPPHPFQ). Residues 42–62 (FLAWLLYLYFAVTGFGVFVPL) form a helical membrane-spanning segment. Residues 63 to 71 (LPTHWIPAG) are Lumenal-facing. A helical transmembrane segment spans residues 72–92 (YICTGITFVCHLFMHLMAVSI). Residues 93–174 (DPADYNVRAK…YWLFLNSVIS (82 aa)) lie on the Cytoplasmic side of the membrane. Positions 121 to 173 (ENCHCYLCEVDVGPKSKHCSACNKCVASFDHHCRWLNNCVGSRNYWLFLNSVI) constitute a DHHC domain. The S-palmitoyl cysteine intermediate role is filled by Cys-153. Residues 175–195 (ALLGIVLVVVIASYVFIEFFL) form a helical membrane-spanning segment. At 196–230 (DPSKLRSDKHFQQVRNESVVWFVFLPVAPVTTAGP) the chain is on the lumenal side. Residues 231-251 (AIPALAGVTIALGLLSALLLG) form a helical membrane-spanning segment. Residues 252–578 (HLLCFHIYLM…PSSRVGTSLA (327 aa)) are Cytoplasmic-facing. Basic and acidic residues predominate over residues 278–288 (QEAGDSRKPPP). Disordered regions lie at residues 278-298 (QEAG…PKLN), 345-376 (HMDE…KRKV), 497-517 (SAAG…TAAR), and 532-578 (SMFM…TSLA). The span at 363-376 (PHPHKHAQKKKRKV) shows a compositional bias: basic residues. Residues 552–561 (AAKRKQTGKK) are compositionally biased toward basic residues.

It belongs to the DHHC palmitoyltransferase family.

It is found in the endosome membrane. The protein resides in the endoplasmic reticulum membrane. The protein localises to the golgi apparatus. The catalysed reaction is L-cysteinyl-[protein] + hexadecanoyl-CoA = S-hexadecanoyl-L-cysteinyl-[protein] + CoA. In terms of biological role, palmitoyltransferase that catalyzes the addition of palmitate onto various protein substrates, such as ncdn and nlrp3. This is Palmitoyltransferase ZDHHC1 from Danio rerio (Zebrafish).